Reading from the N-terminus, the 251-residue chain is Hydroxyacylglutathione hydrolase (251 aa).

Zn(2+)-binding residues include His53, His55, Asp57, His58, His110, Asp127, and His165.

The protein belongs to the metallo-beta-lactamase superfamily. Glyoxalase II family. As to quaternary structure, monomer. The cofactor is Zn(2+).

The catalysed reaction is an S-(2-hydroxyacyl)glutathione + H2O = a 2-hydroxy carboxylate + glutathione + H(+). It participates in secondary metabolite metabolism; methylglyoxal degradation; (R)-lactate from methylglyoxal: step 2/2. Thiolesterase that catalyzes the hydrolysis of S-D-lactoyl-glutathione to form glutathione and D-lactic acid. This chain is Hydroxyacylglutathione hydrolase, found in Salmonella paratyphi C (strain RKS4594).